Reading from the N-terminus, the 443-residue chain is Putative F-box/FBD/LRR-repeat protein At5g22670 (443 aa).

The F-box domain maps to 10-56; the sequence is QDSISLLPDDLLCRILSNLPTKVAVRTSVLSKRWKRFSLSVPLLEFN. LRR repeat units lie at residues 139–165, 166–191, 219–243, 275–300, and 325–353; these read SLRL…HLID, NIYP…NVSR, YGDI…SLRD, NFLL…TMSG, and YAVF…VLEL. The region spanning 361–412 is the FBD domain; that stretch reads LLILSSSIPKCLRSSLEHVEIHTPISGAEAEMKLVKYFLENSAVLKKFTLQL.

This chain is Putative F-box/FBD/LRR-repeat protein At5g22670, found in Arabidopsis thaliana (Mouse-ear cress).